Here is a 295-residue protein sequence, read N- to C-terminus: 4-hydroxy-tetrahydrodipicolinate synthase (295 aa).

Threonine 45 serves as a coordination point for pyruvate. The active-site Proton donor/acceptor is the tyrosine 131. Catalysis depends on lysine 159, which acts as the Schiff-base intermediate with substrate. Valine 202 lines the pyruvate pocket.

The protein belongs to the DapA family. As to quaternary structure, homotetramer; dimer of dimers.

Its subcellular location is the cytoplasm. It carries out the reaction L-aspartate 4-semialdehyde + pyruvate = (2S,4S)-4-hydroxy-2,3,4,5-tetrahydrodipicolinate + H2O + H(+). The protein operates within amino-acid biosynthesis; L-lysine biosynthesis via DAP pathway; (S)-tetrahydrodipicolinate from L-aspartate: step 3/4. Catalyzes the condensation of (S)-aspartate-beta-semialdehyde [(S)-ASA] and pyruvate to 4-hydroxy-tetrahydrodipicolinate (HTPA). The polypeptide is 4-hydroxy-tetrahydrodipicolinate synthase (Methanothrix thermoacetophila (strain DSM 6194 / JCM 14653 / NBRC 101360 / PT) (Methanosaeta thermophila)).